We begin with the raw amino-acid sequence, 90 residues long: SAGA-associated factor 11 (90 aa).

The SGF11-type zinc-finger motif lies at 63-84 (FSCDNCGRKIAGGRFAQHINKC).

This sequence belongs to the SGF11 family. Component of the 1.8 MDa SAGA transcription coactivator-HAT complex. SAGA is built of 5 distinct domains with specialized functions. Within the SAGA complex, SUS1, SGF11, SGF73 and UBP8 form an additional subcomplex of SAGA called the DUB module (deubiquitination module). Interacts directly with SGF73, SUS1 and UBP8.

It localises to the nucleus. In terms of biological role, functions as a component of the transcription regulatory histone acetylation (HAT) complex SAGA. At the promoters, SAGA is required for recruitment of the basal transcription machinery. It influences RNA polymerase II transcriptional activity through different activities such as TBP interaction and promoter selectivity, interaction with transcription activators, and chromatin modification through histone acetylation and deubiquitination. SAGA acetylates nucleosomal histone H3 to some extent (to form H3K9ac, H3K14ac, H3K18ac and H3K23ac). SAGA interacts with DNA via upstream activating sequences (UASs). Involved in transcriptional regulation of a subset of SAGA-regulated genes. Within the SAGA complex, participates in a subcomplex, that specifically deubiquitinates histones H2B. In Lodderomyces elongisporus (strain ATCC 11503 / CBS 2605 / JCM 1781 / NBRC 1676 / NRRL YB-4239) (Yeast), this protein is SAGA-associated factor 11.